We begin with the raw amino-acid sequence, 63 residues long: Cypmaclein (63 aa).

Belongs to the GASA family. As to expression, expressed in pollen (at protein level).

The chain is Cypmaclein from Cupressus sempervirens (Italian cypress).